The sequence spans 944 residues: ATP-dependent helicase fft1 (944 aa).

Disordered regions lie at residues 89 to 109 (AAYDPHDQPPERDVSLKESSN) and 174 to 246 (SAQK…NSIP). The segment covering 92–108 (DPHDQPPERDVSLKESS) has biased composition (basic and acidic residues). Residues 174 to 184 (SAQKLNNQPIE) are compositionally biased toward polar residues. Basic and acidic residues predominate over residues 186 to 203 (SSVDKENAKRKRYVEEGT). A compositionally biased stretch (acidic residues) spans 217–227 (LSDEETNEDDL). A compositionally biased stretch (polar residues) spans 230–246 (QSPTACTTDANIDNSIP). Positions 426 to 592 (CLMYKAKLSG…ISLLAFMLPK (167 aa)) constitute a Helicase ATP-binding domain. Residue 439–446 (DEMGLGKT) coordinates ATP. A DEGH box motif is present at residues 543–546 (DEGH). The region spanning 766–923 (KVKKLCSLLK…DSEKIQKEIS (158 aa)) is the Helicase C-terminal domain.

The protein belongs to the SNF2/RAD54 helicase family.

The protein localises to the nucleus. The catalysed reaction is ATP + H2O = ADP + phosphate + H(+). Its function is as follows. DNA helicase that possesses intrinsic ATP-dependent nucleosome-remodeling activity and is required for heterochromatin organization. This chain is ATP-dependent helicase fft1 (fft1), found in Schizosaccharomyces pombe (strain 972 / ATCC 24843) (Fission yeast).